The following is a 277-amino-acid chain: Collectin-10 (277 aa).

Residues 1–27 (MNGFRVLLRSNLSMLLLLALLHFQSLG) form the signal peptide. The N-linked (GlcNAc...) asparagine glycan is linked to Asn-11. The interval 41 to 103 (THTISPGPKG…IGKKGDKGEK (63 aa)) is disordered. A Collagen-like domain is found at 45-103 (SPGPKGDDGERGDTGEEGKDGKVGRQGPKGVKGELGDMGAQGNIGKSGPIGKKGDKGEK). Over residues 49–67 (KGDDGERGDTGEEGKDGKV) the composition is skewed to basic and acidic residues. The 117-residue stretch at 155–271 (TEEKFYYIVQ…CHLTMYFVCE (117 aa)) folds into the C-type lectin domain. Cystine bridges form between Cys-176-Cys-270 and Cys-248-Cys-262. N-linked (GlcNAc...) asparagine glycosylation is present at Asn-258.

Belongs to the COLEC10/COLEC11 family. In terms of tissue distribution, expressed mainly in the liver and stomach, but also in muscles, testes, and intestines.

It localises to the secreted. The protein resides in the golgi apparatus. The protein localises to the cytoplasm. Its function is as follows. Lectin that binds to various sugars: galactose &gt; mannose = fucose &gt; N-acetylglucosamine &gt; N-acetylgalactosamine. Acts as a chemoattractant, probably involved in the regulation of cell migration. This is Collectin-10 (Colec10) from Mus musculus (Mouse).